The primary structure comprises 567 residues: Dynein, 70 kDa intermediate chain, flagellar outer arm (567 aa).

WD repeat units follow at residues 214 to 254, 261 to 302, 360 to 399, and 404 to 444; these read VPTS…GPVE, SHRD…ECVE, GHHG…KTPI, and YHPT…NEPT.

It belongs to the dynein intermediate chain family. In terms of assembly, consists of at least 3 heavy chains (alpha, beta and gamma), 2 intermediate chains and 8 light chains.

The protein resides in the cytoplasm. Its subcellular location is the cytoskeleton. It localises to the flagellum axoneme. May play a role in regulating dynein heavy chain (DHC) activity. May function in holding IC78 to the DHC, or in stabilizing the entire dynein complex. In Chlamydomonas reinhardtii (Chlamydomonas smithii), this protein is Dynein, 70 kDa intermediate chain, flagellar outer arm (ODA6).